The chain runs to 290 residues: NH(3)-dependent NAD(+) synthetase (290 aa).

33–40 (GVSGGVDS) serves as a coordination point for ATP. Aspartate 39 contributes to the Mg(2+) binding site. A deamido-NAD(+)-binding site is contributed by arginine 154. Threonine 174 serves as a coordination point for ATP. Glutamate 179 contacts Mg(2+). Deamido-NAD(+)-binding residues include lysine 187 and aspartate 194. ATP is bound by residues lysine 203 and serine 225.

It belongs to the NAD synthetase family. In terms of assembly, homodimer.

It catalyses the reaction deamido-NAD(+) + NH4(+) + ATP = AMP + diphosphate + NAD(+) + H(+). It participates in cofactor biosynthesis; NAD(+) biosynthesis; NAD(+) from deamido-NAD(+) (ammonia route): step 1/1. In terms of biological role, catalyzes the ATP-dependent amidation of deamido-NAD to form NAD. Uses ammonia as a nitrogen source. The sequence is that of NH(3)-dependent NAD(+) synthetase from Thermotoga neapolitana (strain ATCC 49049 / DSM 4359 / NBRC 107923 / NS-E).